We begin with the raw amino-acid sequence, 256 residues long: Floral homeotic protein APETALA 1 (256 aa).

In terms of domain architecture, MADS-box spans 1 to 61 (MGRGRVQLKR…GKLFEYSTDS (61 aa)). Residues 88 to 178 (NTNWSMEYNR…SKQIKEREKI (91 aa)) form the K-box domain. The interval 184–206 (EQWDQQNHGHNMPPPPPPQQHQI) is disordered.

In terms of assembly, homodimer capable of binding to CArG-box sequences.

The protein resides in the nucleus. In terms of biological role, transcription factor that promotes early floral meristem identity in synergy with LEAFY. Displays a redundant function with CAULIFLOWER in the up-regulation of LEAFY. Required subsequently for the transition of an inflorescence meristem into a floral meristem, and for the normal development of sepals and petals in flowers. Regulates positively B class homeotic proteins. The polypeptide is Floral homeotic protein APETALA 1 (AP1) (Arabidopsis lyrata subsp. lyrata (Lyre-leaved rock-cress)).